Reading from the N-terminus, the 135-residue chain is Cytochrome b5 (135 aa).

The region spanning 4 to 80 (SKVYSLAEVS…MDEMCVGDID (77 aa)) is the Cytochrome b5 heme-binding domain. Histidine 39 and histidine 63 together coordinate heme. Residues 106–126 (FIIKLLQFLVPLIILGVAVGI) form a helical membrane-spanning segment.

Belongs to the cytochrome b5 family.

It localises to the endoplasmic reticulum membrane. The protein localises to the microsome membrane. Functionally, membrane bound hemoprotein which function as an electron carrier for several membrane bound oxygenases. The chain is Cytochrome b5 from Cuscuta reflexa (Southern Asian dodder).